We begin with the raw amino-acid sequence, 404 residues long: L-cysteine:1D-myo-inositol 2-amino-2-deoxy-alpha-D-glucopyranoside ligase 1 (404 aa).

Cys47 is a binding site for Zn(2+). L-cysteinyl-5'-AMP-binding positions include 47 to 50 (CGIT), Thr62, and 85 to 87 (NIT). Positions 49–59 (ITPYDSTHLGH) match the 'HIGH' region motif. The 'ERGGDP' region motif lies at 188 to 193 (ERGGDP). Trp228 lines the L-cysteinyl-5'-AMP pocket. Zn(2+) is bound at residue Cys232. 250–252 (GSD) provides a ligand contact to L-cysteinyl-5'-AMP. A Zn(2+)-binding site is contributed by His257. Residue Ile284 participates in L-cysteinyl-5'-AMP binding. A 'KMSKS' region motif is present at residues 290–294 (KMSKS).

Belongs to the class-I aminoacyl-tRNA synthetase family. MshC subfamily. In terms of assembly, monomer. Zn(2+) is required as a cofactor.

The catalysed reaction is 1D-myo-inositol 2-amino-2-deoxy-alpha-D-glucopyranoside + L-cysteine + ATP = 1D-myo-inositol 2-(L-cysteinylamino)-2-deoxy-alpha-D-glucopyranoside + AMP + diphosphate + H(+). Catalyzes the ATP-dependent condensation of GlcN-Ins and L-cysteine to form L-Cys-GlcN-Ins. The chain is L-cysteine:1D-myo-inositol 2-amino-2-deoxy-alpha-D-glucopyranoside ligase 1 from Corynebacterium jeikeium (strain K411).